The chain runs to 953 residues: Probable isoleucine--tRNA ligase, cytoplasmic (953 aa).

The short motif at 45 to 55 (PFATGLPHYGH) is the 'HIGH' region element. The short motif at 634 to 638 (KMSKR) is the 'KMSKS' region element. Residue lysine 637 coordinates ATP.

The protein belongs to the class-I aminoacyl-tRNA synthetase family.

It is found in the cytoplasm. It carries out the reaction tRNA(Ile) + L-isoleucine + ATP = L-isoleucyl-tRNA(Ile) + AMP + diphosphate. This Enterocytozoon bieneusi (strain H348) (Microsporidian parasite) protein is Probable isoleucine--tRNA ligase, cytoplasmic.